A 560-amino-acid polypeptide reads, in one-letter code: Nucleoprotein (560 aa).

The binding site for the cap structure m7GTP stretch occupies residues 54–236; the sequence is LRKSKRGDTD…ITKDESALNI (183 aa). The Mn(2+) site is built by Asp380 and Glu382. Zn(2+)-binding residues include Glu390, Cys497, His500, and Cys521. Position 525 (Asp525) interacts with Mn(2+).

Belongs to the arenaviridae nucleocapsid protein family. In terms of assembly, homomultimerizes to form the nucleocapsid. Binds to viral genomic RNA. Interacts with glycoprotein G2. Interacts with protein Z; this interaction probably directs the encapsidated genome to budding sites. Interacts with protein L; this interaction does not interfere with Z-L interaction. Interacts with host IKBKE (via Protein kinase domain); the interaction inhibits IKBKE kinase activity.

It is found in the virion. Its subcellular location is the host cytoplasm. Functionally, encapsidates the genome, protecting it from nucleases. The encapsidated genomic RNA is termed the nucleocapsid (NC). Serves as template for viral transcription and replication. The increased presence of protein N in host cell does not seem to trigger the switch from transcription to replication as observed in other negative strain RNA viruses. Through the interaction with host IKBKE, strongly inhibits the phosphorylation and nuclear translocation of host IRF3, a protein involved in interferon activation pathway, leading to the inhibition of interferon-beta and IRF3-dependent promoters activation. Also encodes a functional 3'-5' exoribonuclease that degrades preferentially dsRNA substrates and thereby participates in the suppression of interferon induction. This chain is Nucleoprotein, found in Homo sapiens (Human).